Consider the following 94-residue polypeptide: MLKPLGDRVIISFVETEEKSVGGFVLAGASHDATKTAKVLAVGDGIRTLTGELVAPSVAEGDTVLVENGAGLEVKDGNEKVTVVRESDIVAVVK.

Belongs to the GroES chaperonin family. In terms of assembly, heptamer of 7 subunits arranged in a ring. Interacts with the chaperonin GroEL.

The protein localises to the cytoplasm. In terms of biological role, together with the chaperonin GroEL, plays an essential role in assisting protein folding. The GroEL-GroES system forms a nano-cage that allows encapsulation of the non-native substrate proteins and provides a physical environment optimized to promote and accelerate protein folding. GroES binds to the apical surface of the GroEL ring, thereby capping the opening of the GroEL channel. In Streptococcus agalactiae serotype III (strain NEM316), this protein is Co-chaperonin GroES.